Here is a 65-residue protein sequence, read N- to C-terminus: Large ribosomal subunit protein bL31 (65 aa).

Cys-16, Cys-18, Cys-36, and Cys-39 together coordinate Zn(2+).

It belongs to the bacterial ribosomal protein bL31 family. Type A subfamily. In terms of assembly, part of the 50S ribosomal subunit. The cofactor is Zn(2+).

Functionally, binds the 23S rRNA. The protein is Large ribosomal subunit protein bL31 of Geotalea daltonii (strain DSM 22248 / JCM 15807 / FRC-32) (Geobacter daltonii).